The sequence spans 100 residues: Putative antiporter subunit mnhF2 (100 aa).

Transmembrane regions (helical) follow at residues 6-26, 38-58, and 62-82; these read TNFFITSALVLFGIAFIIGLF, VVAFDASSAVIMCIIGIVSVI, and VSFLDSIMLVAIISFVSSVSI.

This sequence belongs to the CPA3 antiporters (TC 2.A.63) subunit F family. As to quaternary structure, may form a heterooligomeric complex that consists of seven subunits: mnhA2, mnhB2, mnhC2, mnhD2, mnhE2, mnhF2 and mnhG2.

Its subcellular location is the cell membrane. This Staphylococcus haemolyticus (strain JCSC1435) protein is Putative antiporter subunit mnhF2 (mnhF2).